Reading from the N-terminus, the 174-residue chain is MIESVDLNAQERAGRAFPVSWDQFHRDCRALTWRLNEVGPFAAVIAITRGGLVPAAIVARELGVRVIDTVCIASYEHDRQGELQVLKGVSDSTKALGGGTGKGLLIVDDLVDTGATARLVREMLPDAHFATVYAKPKGRPLVDTFITEVSQDTWIFFPWDLALTFQPPMKDGAG.

Residues 49–50 (RG) and 108–116 (DDLVDTGAT) contribute to the 5-phospho-alpha-D-ribose 1-diphosphate site. Position 109 (Asp-109) interacts with Mg(2+). Guanine contacts are provided by Asp-112 and Ile-155. Xanthine contacts are provided by Asp-112 and Ile-155. GMP contacts are provided by residues 112–116 (DTGAT) and 154–155 (WI).

Belongs to the purine/pyrimidine phosphoribosyltransferase family. XGPT subfamily. In terms of assembly, homotetramer. It depends on Mg(2+) as a cofactor.

The protein localises to the cell inner membrane. It carries out the reaction GMP + diphosphate = guanine + 5-phospho-alpha-D-ribose 1-diphosphate. The catalysed reaction is XMP + diphosphate = xanthine + 5-phospho-alpha-D-ribose 1-diphosphate. It catalyses the reaction IMP + diphosphate = hypoxanthine + 5-phospho-alpha-D-ribose 1-diphosphate. Its pathway is purine metabolism; GMP biosynthesis via salvage pathway; GMP from guanine: step 1/1. It functions in the pathway purine metabolism; XMP biosynthesis via salvage pathway; XMP from xanthine: step 1/1. Its function is as follows. Purine salvage pathway enzyme that catalyzes the transfer of the ribosyl-5-phosphate group from 5-phospho-alpha-D-ribose 1-diphosphate (PRPP) to the N9 position of the 6-oxopurines guanine and xanthine to form the corresponding ribonucleotides GMP (guanosine 5'-monophosphate) and XMP (xanthosine 5'-monophosphate), with the release of PPi. To a lesser extent, also acts on hypoxanthine. The polypeptide is Xanthine-guanine phosphoribosyltransferase (Rhodopseudomonas palustris (strain BisB18)).